A 358-amino-acid polypeptide reads, in one-letter code: Na(+)/H(+) exchange regulatory cofactor NHE-RF1 (358 aa).

An N-acetylserine modification is found at S2. Residues S2 and S46 each carry the phosphoserine modification. One can recognise a PDZ 1 domain in the interval 14-94 (LCCLEKGPNG…AVRLLVVDPE (81 aa)). Positions 114–134 (QETPGQAEPAAAAEAQGAGNE) are enriched in low complexity. Disordered stretches follow at residues 114 to 192 (QETP…EASG) and 269 to 358 (SREA…FSNL). Residues 135 to 149 (NEPREADKSHPEQRK) are compositionally biased toward basic and acidic residues. The region spanning 154–234 (LCTMKKGPSG…ETKLLVVDRE (81 aa)) is the PDZ 2 domain. Phosphoserine is present on residues S162, S269, S280, S290, and S291. Residues 287 to 306 (RSASSDTSEELNSQDSPPKQ) are compositionally biased toward polar residues. The residue at position 293 (T293) is a Phosphothreonine. Phosphoserine is present on residues S294, S299, and S302. Low complexity predominate over residues 307–319 (DSTAPSSTSSSDP). The span at 348–358 (WSKKNELFSNL) shows a compositional bias: basic and acidic residues.

Homodimer, and heterodimer with NHERF2. Binds the N-termini of EZR, RDX and MSN. Binds the C-termini of PDGFRA, PDGFRB, ADRB2, NOS2 and CFTR. Binds ARHGAP17, EPI64, RACK1, OPRK1, GNAQ, CTNNB1 and PLCB3. Binds PDZK1. Interacts with CLCN3. Binds the C-terminus of PAG1. In resting T-cells, part of a PAG1-NHERF1-MSN complex which is disrupted upon TCR activation. Forms a complex with CFTR and SLC4A7. Forms a complex with SLC4A7 and ATP6V1B1. Interacts with TRPC4 (via the PDZ-binding domain). Directly interacts with HTR4. Interacts (via the PDZ 1 domain) with PODXL (via the C-terminal PDZ-binding motif DTHL); interaction is not detected in glomerular epithelium cells. Interacts (via the PDZ 1 domain) with PODXL (via the C-terminal PDZ-binding motif DTHL); the interaction take place early in the secretory pathway and is necessary for its apical membrane sorting. Interacts with SLC26A3. Interacts with MCC. Interacts with SLC34A1. Interacts (via the PDZ domains) with SLC26A6 isoform 4 and isoform 5. Interacts (via PDZ domains) with ACE2 (via PDZ-binding motif); the interaction may enhance ACE2 membrane residence. Post-translationally, phosphorylated on serine residues.

Its subcellular location is the cytoplasm. It localises to the apical cell membrane. The protein localises to the endomembrane system. The protein resides in the cell projection. It is found in the filopodium. Its subcellular location is the ruffle. It localises to the microvillus. Scaffold protein that connects plasma membrane proteins with members of the ezrin/moesin/radixin family and thereby helps to link them to the actin cytoskeleton and to regulate their surface expression. Necessary for recycling of internalized ADRB2. Was first known to play a role in the regulation of the activity and subcellular location of SLC9A3. Necessary for cAMP-mediated phosphorylation and inhibition of SLC9A3. Involved in sperm capacitation. May participate in the regulation of the chloride and bicarbonate homeostasis in spermatozoa. May enhance Wnt signaling. May participate in HTR4 targeting to microvilli. Involved in the regulation of phosphate reabsorption in the renal proximal tubules. The protein is Na(+)/H(+) exchange regulatory cofactor NHE-RF1 (NHERF1) of Macaca fascicularis (Crab-eating macaque).